The primary structure comprises 285 residues: Neuralized-like protein 2 (285 aa).

The interval 1-20 (MAAASEPVDSGALWGLERPE) is disordered. In terms of domain architecture, NHR spans 23-244 (PTRFHRVHGA…STKSVRLVQL (222 aa)). The region spanning 250–285 (SLQTLCRLVIQRSMVHRLAIDGLHLPKELKDFCKYE) is the SOCS box domain.

In terms of assembly, probable component the ECS(NEURL2) E3 ubiquitin-protein ligase complex consisting of ELOB/Elongin B, ELOC/Elongin C, CUL5, RBX1 and NEURL2. Interacts with CTNNB1. Expressed specifically in skeletal and cardiac muscles.

It is found in the cytoplasm. It participates in protein modification; protein ubiquitination. Functionally, plays an important role in the process of myofiber differentiation and maturation. Probable substrate-recognition component of a SCF-like ECS (Elongin BC-CUL2/5-SOCS-box protein) E3 ubiquitin-protein ligase complex, which mediates the ubiquitination of proteins. Probably contributes to catalysis through recognition and positioning of the substrate and the ubiquitin-conjugating enzyme. During myogenesis, controls the ubiquitination and degradation of the specific pool of CTNNB1/beta-catenin located at the sarcolemma. This is Neuralized-like protein 2 (NEURL2) from Homo sapiens (Human).